The primary structure comprises 359 residues: tRNA/tmRNA (uracil-C(5))-methyltransferase (359 aa).

S-adenosyl-L-methionine is bound by residues glutamine 183, tyrosine 211, asparagine 216, glutamate 232, and aspartate 292. Cysteine 317 functions as the Nucleophile in the catalytic mechanism. The active-site Proton acceptor is the glutamate 351.

The protein belongs to the class I-like SAM-binding methyltransferase superfamily. RNA M5U methyltransferase family. TrmA subfamily.

The enzyme catalyses uridine(54) in tRNA + S-adenosyl-L-methionine = 5-methyluridine(54) in tRNA + S-adenosyl-L-homocysteine + H(+). It carries out the reaction uridine(341) in tmRNA + S-adenosyl-L-methionine = 5-methyluridine(341) in tmRNA + S-adenosyl-L-homocysteine + H(+). Its function is as follows. Dual-specificity methyltransferase that catalyzes the formation of 5-methyluridine at position 54 (m5U54) in all tRNAs, and that of position 341 (m5U341) in tmRNA (transfer-mRNA). In Pseudomonas fluorescens (strain Pf0-1), this protein is tRNA/tmRNA (uracil-C(5))-methyltransferase.